We begin with the raw amino-acid sequence, 145 residues long: RING-H2 finger protein ATL18 (145 aa).

Positions 1 to 29 (MISMLFPRSPLCTAAIVFYTCVCIPLGRL) are cleaved as a signal peptide. Residues 62-105 (CPICLVEFEAEDAVTHLPRCAHLFHINCIEPWLLRGHLTCPLCR) form an RING-type; atypical zinc finger. The helical transmembrane segment at 125–145 (STLYLSIFFFFCIFLHLLGYL) threads the bilayer.

This sequence belongs to the RING-type zinc finger family. ATL subfamily.

It localises to the membrane. It carries out the reaction S-ubiquitinyl-[E2 ubiquitin-conjugating enzyme]-L-cysteine + [acceptor protein]-L-lysine = [E2 ubiquitin-conjugating enzyme]-L-cysteine + N(6)-ubiquitinyl-[acceptor protein]-L-lysine.. It functions in the pathway protein modification; protein ubiquitination. In Arabidopsis thaliana (Mouse-ear cress), this protein is RING-H2 finger protein ATL18 (ATL18).